The primary structure comprises 262 residues: Malonyl-[acyl-carrier protein] O-methyltransferase (262 aa).

The protein belongs to the methyltransferase superfamily.

It carries out the reaction malonyl-[ACP] + S-adenosyl-L-methionine = malonyl-[ACP] methyl ester + S-adenosyl-L-homocysteine. It participates in cofactor biosynthesis; biotin biosynthesis. Converts the free carboxyl group of a malonyl-thioester to its methyl ester by transfer of a methyl group from S-adenosyl-L-methionine (SAM). It allows to synthesize pimeloyl-ACP via the fatty acid synthetic pathway. The sequence is that of Malonyl-[acyl-carrier protein] O-methyltransferase from Dechloromonas aromatica (strain RCB).